A 139-amino-acid chain; its full sequence is Glutamate mutase sigma subunit (139 aa).

The B12-binding domain occupies 4–139; the sequence is KIKLVLGVIG…DLHADFPDHA (136 aa). Adenosylcob(III)alamin contacts are provided by residues 14–18, histidine 17, 62–64, and 94–98; these read SDCHA, SSL, and NIVVG.

Belongs to the methylaspartate mutase GlmS subunit family. Heterotetramer composed of 2 epsilon subunits (GlmE) and 2 sigma subunits (GlmS). GlmE exists as a homodimer and GlmS as a monomer. Adenosylcob(III)alamin is required as a cofactor.

It carries out the reaction (2S,3S)-3-methyl-L-aspartate = L-glutamate. The protein operates within amino-acid degradation; L-glutamate degradation via mesaconate pathway; acetate and pyruvate from L-glutamate: step 1/4. Functionally, catalyzes the carbon skeleton rearrangement of L-glutamate to L-threo-3-methylaspartate ((2S,3S)-3-methylaspartate). The polypeptide is Glutamate mutase sigma subunit (Treponema denticola (strain ATCC 35405 / DSM 14222 / CIP 103919 / JCM 8153 / KCTC 15104)).